Here is a 196-residue protein sequence, read N- to C-terminus: Endonuclease V (196 aa).

Mg(2+)-binding residues include Asp-37 and Asp-98.

It belongs to the endonuclease V family. The cofactor is Mg(2+).

It is found in the cytoplasm. The catalysed reaction is Endonucleolytic cleavage at apurinic or apyrimidinic sites to products with a 5'-phosphate.. In terms of biological role, DNA repair enzyme involved in the repair of deaminated bases. Selectively cleaves double-stranded DNA at the second phosphodiester bond 3' to a deoxyinosine leaving behind the intact lesion on the nicked DNA. The sequence is that of Endonuclease V from Sulfolobus acidocaldarius (strain ATCC 33909 / DSM 639 / JCM 8929 / NBRC 15157 / NCIMB 11770).